Consider the following 324-residue polypeptide: Muscleblind-like protein (324 aa).

2 consecutive C3H1-type zinc fingers follow at residues 38–66 and 72–100; these read WLQV…HPPP and QGRV…HPPQ.

Belongs to the muscleblind family. Expressed in neurons around the pharynx.

The protein resides in the nucleus. Its function is as follows. Binds to RNA with repeat sequences 5'-CUG-3' and 5'-CCUG-3'. The chain is Muscleblind-like protein (mbl-1) from Caenorhabditis elegans.